The primary structure comprises 78 residues: Putative defensin-like protein 202 (78 aa).

Positions 1 to 29 are cleaved as a signal peptide; the sequence is MAKTQNFVCFTAVLLILILVSTEIPMIEG. 3 disulfides stabilise this stretch: Cys44/Cys65, Cys49/Cys74, and Cys53/Cys76.

The protein belongs to the DEFL family.

The protein resides in the secreted. In Arabidopsis thaliana (Mouse-ear cress), this protein is Putative defensin-like protein 202.